A 57-amino-acid polypeptide reads, in one-letter code: Sperm protamine P1-type (57 aa).

The tract at residues 1–57 (MARYRHNRSRSRSRHRRRRRGHRGGRYRRRRRRGRYGHRRHHRGHSRRRRKRRRSRH) is disordered.

Belongs to the protamine P1 family. In terms of tissue distribution, testis.

The protein resides in the nucleus. The protein localises to the chromosome. Functionally, protamines substitute for histones in the chromatin of sperm during the haploid phase of spermatogenesis. They compact sperm DNA into a highly condensed, stable and inactive complex. The chain is Sperm protamine P1-type from Alligator mississippiensis (American alligator).